Here is a 337-residue protein sequence, read N- to C-terminus: ATP-dependent 6-phosphofructokinase (337 aa).

Glycine 11 serves as a coordination point for ATP. ADP is bound at residue 21–25 (RAVVR). Residues 72–73 (RY) and 102–105 (GDGS) each bind ATP. Aspartate 103 lines the Mg(2+) pocket. Residue 125–127 (TID) participates in substrate binding. Aspartate 127 functions as the Proton acceptor in the catalytic mechanism. Arginine 154 provides a ligand contact to ADP. Residues arginine 162 and 169-171 (MGR) contribute to the substrate site. ADP is bound by residues 185-187 (GAD), lysine 212, and 214-216 (KNH). Substrate is bound by residues glutamate 223, arginine 245, and 251–254 (HILR).

Belongs to the phosphofructokinase type A (PFKA) family. ATP-dependent PFK group I subfamily. Prokaryotic clade 'B1' sub-subfamily. In terms of assembly, homotetramer. The cofactor is Mg(2+).

The protein localises to the cytoplasm. It catalyses the reaction beta-D-fructose 6-phosphate + ATP = beta-D-fructose 1,6-bisphosphate + ADP + H(+). It participates in carbohydrate degradation; glycolysis; D-glyceraldehyde 3-phosphate and glycerone phosphate from D-glucose: step 3/4. Allosterically activated by ADP and other diphosphonucleosides, and allosterically inhibited by phosphoenolpyruvate. Functionally, catalyzes the phosphorylation of D-fructose 6-phosphate to fructose 1,6-bisphosphate by ATP, the first committing step of glycolysis. This chain is ATP-dependent 6-phosphofructokinase, found in Streptococcus pyogenes serotype M1.